The primary structure comprises 160 residues: Large ribosomal subunit protein uL22c (160 aa).

This sequence belongs to the universal ribosomal protein uL22 family. In terms of assembly, part of the 50S ribosomal subunit.

It localises to the plastid. The protein localises to the chloroplast. Functionally, this protein binds specifically to 23S rRNA. In terms of biological role, the globular domain of the protein is located near the polypeptide exit tunnel on the outside of the subunit, while an extended beta-hairpin is found that lines the wall of the exit tunnel in the center of the 70S ribosome. The sequence is that of Large ribosomal subunit protein uL22c (rpl22) from Eucalyptus globulus subsp. globulus (Tasmanian blue gum).